The sequence spans 140 residues: Myrosinase 2 (140 aa).

Arginine 70 acts as the Nucleophile in catalysis. 2 N-linked (GlcNAc...) asparagine glycosylation sites follow: asparagine 114 and asparagine 127.

Belongs to the glycosyl hydrolase 1 family. In terms of assembly, homodimer.

The enzyme catalyses a thioglucoside + H2O = a sugar + a thiol.. Inhibited by ascorbate. Functionally, degradation of glucosinolates (glucose residue linked by a thioglucoside bound to an amino acid derivative) to glucose, sulfate and any of the products: thiocyanates, isothiocyanates, nitriles, epithionitriles or oxazolidine-2-thiones. The sequence is that of Myrosinase 2 from Brevicoryne brassicae (Mealy cabbage aphid).